The sequence spans 264 residues: Regulatory protein RecX (264 aa).

It belongs to the RecX family.

The protein resides in the cytoplasm. In terms of biological role, negatively modulates RecA activity. This chain is Regulatory protein RecX, found in Bacillus subtilis (strain 168).